A 771-amino-acid polypeptide reads, in one-letter code: Polymeric immunoglobulin receptor (771 aa).

An N-terminal signal peptide occupies residues 1-18; the sequence is MRLYLFTLLVTVFSGVST. Over 19 to 645 the chain is Extracellular; sequence KSPIFGPQEV…DGQSRSSSSK (627 aa). Residues 21 to 120 form the Ig-like V-type 1; required for binding to polymeric IgA and IgM domain; it reads PIFGPQEVSS…GLGTSNRGLS (100 aa). Cys-40 and Cys-110 are joined by a disulfide. Asn-90, Asn-147, Asn-170, and Asn-206 each carry an N-linked (GlcNAc...) asparagine glycan. Ig-like V-type domains follow at residues 135 to 237, 245 to 351, 352 to 457, and 463 to 563; these read SDTH…DLQV, LYKD…ESTI, PNRR…LQVA, and PNLE…IYIA. Disulfide bonds link Cys-152-Cys-220, Cys-257-Cys-324, and Cys-370-Cys-440. N-linked (GlcNAc...) asparagine glycosylation is found at Asn-420 and Asn-471. Cysteines 484 and 546 form a disulfide. Residues 622 to 641 are disordered; it reads QAQENRASGDAGSADGQSRS. Low complexity predominate over residues 627-641; that stretch reads RASGDAGSADGQSRS. A helical membrane pass occupies residues 646 to 668; it reads VLFSTLVPLGLVLAVGAIAVWVA. The Cytoplasmic segment spans residues 669 to 771; that stretch reads RVRHRKNVDR…AQVHDGPQEA (103 aa). 4 positions are modified to phosphoserine: Ser-680, Ser-689, Ser-696, and Ser-742.

As to quaternary structure, interacts (mainly via CDR1-like domain) with dimeric IgA. Interacts (mainly via CDR2-like domain) with pentameric IgM. Either free or part of the secretory IgA (sIgA) complex that consists of two, four or five IgA monomers, and two additional non-Ig polypeptides, namely the JCHAIN and the secretory component (the proteolytic product of PIGR). Free secretory component interacts with bacterial antigens toxA of C.difficile and eae of E.coli. In terms of processing, N-glycosylated. N-glycosylation is required for anchoring IgA molecules to mucus, but is not necessary for Ig binding.

The protein resides in the cell membrane. Its subcellular location is the secreted. Functionally, mediates selective transcytosis of polymeric IgA and IgM across mucosal epithelial cells. Binds polymeric IgA and IgM at the basolateral surface of epithelial cells. The complex is then transported across the cell to be secreted at the apical surface. During this process, a cleavage occurs that separates the extracellular (known as the secretory component) from the transmembrane segment. Through its N-linked glycans ensures anchoring of secretory IgA (sIgA) molecules to mucus lining the epithelial surface to neutralize extracellular pathogens. On its own (free form) may act as a non-specific microbial scavenger to prevent pathogen interaction with epithelial cells. The protein is Polymeric immunoglobulin receptor (Pigr) of Mus musculus (Mouse).